Here is a 506-residue protein sequence, read N- to C-terminus: Chaperone SurA (506 aa).

The first 29 residues, 1-29 (MMRRLHSSRRFSGSLLALALGLALPLAHA), serve as a signal peptide directing secretion. 2 consecutive PpiC domains span residues 219 to 320 (PVML…KVLQ) and 351 to 450 (VTQT…QVLE).

It is found in the periplasm. The catalysed reaction is [protein]-peptidylproline (omega=180) = [protein]-peptidylproline (omega=0). In terms of biological role, chaperone involved in the correct folding and assembly of outer membrane proteins. Recognizes specific patterns of aromatic residues and the orientation of their side chains, which are found more frequently in integral outer membrane proteins. May act in both early periplasmic and late outer membrane-associated steps of protein maturation. The chain is Chaperone SurA from Bordetella avium (strain 197N).